The sequence spans 359 residues: tRNA-specific 2-thiouridylase MnmA (359 aa).

ATP contacts are provided by residues 7 to 14 and Met-33; that span reads AMSGGVDS. Cys-101 acts as the Nucleophile in catalysis. A disulfide bridge links Cys-101 with Cys-198. ATP is bound at residue Gly-125. An interaction with tRNA region spans residues 148–150; it reads KDQ. The active-site Cysteine persulfide intermediate is the Cys-198.

Belongs to the MnmA/TRMU family.

It is found in the cytoplasm. The enzyme catalyses S-sulfanyl-L-cysteinyl-[protein] + uridine(34) in tRNA + AH2 + ATP = 2-thiouridine(34) in tRNA + L-cysteinyl-[protein] + A + AMP + diphosphate + H(+). Catalyzes the 2-thiolation of uridine at the wobble position (U34) of tRNA, leading to the formation of s(2)U34. The chain is tRNA-specific 2-thiouridylase MnmA from Chloroflexus aurantiacus (strain ATCC 29366 / DSM 635 / J-10-fl).